A 195-amino-acid chain; its full sequence is CASP-like protein Os03g0196400 (195 aa).

Residues 1–38 (MRQQQAGGVGDGVSPGNVPVCYYGPGGRVPSSLERRAR) lie on the Cytoplasmic side of the membrane. Residues 39–59 (AAEVLLRCAACGLAVLAAALL) traverse the membrane as a helical segment. The Extracellular portion of the chain corresponds to 60–81 (GADRQTRVFFSIQKVARYTDMQ). Residues 82 to 102 (SLVLLVIANGMAACYSLIQCA) form a helical membrane-spanning segment. The Cytoplasmic portion of the chain corresponds to 103-104 (RC). Residues 105–125 (LVMAYIVISAVAAAMEAALIG) traverse the membrane as a helical segment. Residues 126-150 (KYGQPEFQWMKTCHLYKRFCAQAGG) are Extracellular-facing. Residues 151–171 (GVACAIAASVNMVGVALISAF) form a helical membrane-spanning segment. The Cytoplasmic segment spans residues 172 to 195 (NLFRLYGNSNGGGKATTTTMAGGK).

The protein belongs to the Casparian strip membrane proteins (CASP) family. As to quaternary structure, homodimer and heterodimers.

It localises to the cell membrane. The chain is CASP-like protein Os03g0196400 from Oryza sativa subsp. japonica (Rice).